The following is a 610-amino-acid chain: DNA mismatch repair protein MutL (610 aa).

The protein belongs to the DNA mismatch repair MutL/HexB family.

In terms of biological role, this protein is involved in the repair of mismatches in DNA. It is required for dam-dependent methyl-directed DNA mismatch repair. May act as a 'molecular matchmaker', a protein that promotes the formation of a stable complex between two or more DNA-binding proteins in an ATP-dependent manner without itself being part of a final effector complex. The sequence is that of DNA mismatch repair protein MutL from Rickettsia conorii (strain ATCC VR-613 / Malish 7).